We begin with the raw amino-acid sequence, 1416 residues long: MAHGEPYYSSKPDKDFNFGSTMARRQMTPTMVTKLPKFVRNSPQVYDWIVRGLIFPTTGKTYFQRVVVITGGFEDGTYGSFAFDGREWVEIYPIEHLNLMSSLKLIHKANALQERLRLSQEEKATLTLDVQFLQHENVRLKELISKPEPRKIQMKWIIVGAVLTFLSLIPGGYAQSQTNNTIFTDVIAACKYSTETLTENLDLRIKLALANITISDKLDAVRQILNFAFVPRSHWLRTVFYYIHYYEMWNIFMFVLAIGTVMRSTRPGTDLITLATSHLSGFRMAVLPTIPFHTTMTLWVMNTLMVCYYFDNLLAITMAILAPILGIIFLCFMEDSNYVSQIRGLIATAVLIAGGHACLTLTGTTTSLFVVILTCRFVRMATIFIGTRFEIRDANGKVVATVPTRIKNAAFDFFQRLKQSGVRVGVNEFVVIKPGALCVIDTPEGKGTGFFSGNDIVTAAHVVGNNTFVNVCYEGLMYEAKVRYMPEKDIAFITCPGDLHPTARLKLSKNPDYSCVTVMAYVNEDLVVSTAAAMVHGNTLSYAVRTQDGMSGAPVCDKYGRVLAVHQTNTGYTGGAVIIDPADFHPVKAPSQVELLKEEIERLKAQLNSAAENPSTVITQQPTATLEQKSVNDSDVVDLVRTAMEREMKILRDEINGILAPFLQKKKGKTKHGRGRVRRNLRKGVKLLTEEEYRELLEKGLDRETFLDLIDRIIGERSGYPDYDDEDYYDEDDDGWGMVGDDVEFDYTEVINFDQAKPTPAPRTTKPKPCPEPEAETQPLDLSQKKDKQLEHEQQVVKPTKPQKNDPQPYSQTYGKAPIWESYDFDWDEDDAKFILPAPPRLTKADEIVLGSKIVKLRTIIETAIKTQNYSALPEAVFELDKAAYEAGLEGFLQRVKSKNKAPKKLQRAPEDQGAQNYHSLDAWKSLLEPPRERRCVPANFPLLGHLPIDRPIFDDKKPRDDLLGLLPEPTWHAFEEYGPTTWGPQAFIKSFDKFFYAEPIDFFSEYPQLCAFADWATYREFRYLEDTRVIHITATEKNTDSTPAYPKMNYFDTEEKYLESYGWAPYIREFTRVFKGDKPEVLWYLFLKKEIIKEEKIRNSDIRQIVCADPIYTRIGACLEAHQNALMKQHTETSVGQCGWSPMEGGFKKTMQRLVNKGNKYFIEFDWTRYDGTIPPSLFRHIKEIRWNFINKDQREKYRHVHEWYVDNLLNRHVLLPSGEVTLQTRGNPSGQFSTTMDNNMINFWLQAFEFAYFNGPNKDLWKTYDTVVYGDDRLSTTPSVPENYEERVIDMYRDIFGMWVKPGKVICRESIVGLSFCGFTVNADLEPVPTSPEKLMASLLKPYKILPDLESLHGKLLCYQLLAAFMAEDHPFKVYVEHCLSRTAKQLRDSGLPARLTEEQLHRIWRGGPKKCDG.

The stretch at 104 to 146 (KLIHKANALQERLRLSQEEKATLTLDVQFLQHENVRLKELISK) forms a coiled coil. 5 consecutive transmembrane segments (helical) span residues 154–174 (MKWI…GGYA), 239–259 (VFYY…LAIG), 286–306 (VLPT…TLMV), 313–333 (LLAI…LCFM), and 344–364 (GLIA…LTGT). Residues His461, Asp489, and Ser551 each act as charge relay system; for serine protease activity in the active site. Residues 587–614 (VKAPSQVELLKEEIERLKAQLNSAAENP) adopt a coiled-coil conformation. An O-(5'-phospho-RNA)-tyrosine modification is found at Tyr693. A disordered region spans residues 752-815 (NFDQAKPTPA…DPQPYSQTYG (64 aa)). Residues 783–795 (SQKKDKQLEHEQQ) are compositionally biased toward basic and acidic residues. Polar residues predominate over residues 805 to 814 (NDPQPYSQTY). The 127-residue stretch at 1161–1287 (KYFIEFDWTR…TTPSVPENYE (127 aa)) folds into the RdRp catalytic domain.

It belongs to the astroviridae polyprotein 1AB family. In terms of assembly, monomer. In terms of processing, cleaved by the viral and host proteases. The protease is probably autocatalytically cleaved.

The protein resides in the host membrane. It catalyses the reaction RNA(n) + a ribonucleoside 5'-triphosphate = RNA(n+1) + diphosphate. Functionally, responsible for the cleavage of the polyprotein into functional products. Its function is as follows. Protein covalently attached to the 5' extremity of the genomic and subgenomic RNAs. It may serve as a primer for the replicase. The protein is Non-structural polyprotein 1AB (ORF1) of Homo sapiens (Human).